Here is a 444-residue protein sequence, read N- to C-terminus: ATP-dependent protease ATPase subunit HslU (444 aa).

ATP contacts are provided by residues I18, 60–65 (GVGKTE), D256, E322, and R394.

Belongs to the ClpX chaperone family. HslU subfamily. A double ring-shaped homohexamer of HslV is capped on each side by a ring-shaped HslU homohexamer. The assembly of the HslU/HslV complex is dependent on binding of ATP.

It localises to the cytoplasm. In terms of biological role, ATPase subunit of a proteasome-like degradation complex; this subunit has chaperone activity. The binding of ATP and its subsequent hydrolysis by HslU are essential for unfolding of protein substrates subsequently hydrolyzed by HslV. HslU recognizes the N-terminal part of its protein substrates and unfolds these before they are guided to HslV for hydrolysis. This is ATP-dependent protease ATPase subunit HslU from Klebsiella pneumoniae subsp. pneumoniae (strain ATCC 700721 / MGH 78578).